We begin with the raw amino-acid sequence, 65 residues long: Sec-independent protein translocase protein TatA (65 aa).

A helical transmembrane segment spans residues 9 to 29; it reads ILIIVLLVVVVFGIGKLPQVG. The interval 43-65 is disordered; it reads SSGEEEKEEVETKEETKTIEKSE. Over residues 45–54 the composition is skewed to acidic residues; that stretch reads GEEEKEEVET. A compositionally biased stretch (basic and acidic residues) spans 55 to 65; that stretch reads KEETKTIEKSE.

It belongs to the TatA/E family. In terms of assembly, forms a complex with TatC.

The protein localises to the cell membrane. Part of the twin-arginine translocation (Tat) system that transports large folded proteins containing a characteristic twin-arginine motif in their signal peptide across membranes. TatA could form the protein-conducting channel of the Tat system. The chain is Sec-independent protein translocase protein TatA from Dehalococcoides mccartyi (strain ATCC BAA-2266 / KCTC 15142 / 195) (Dehalococcoides ethenogenes (strain 195)).